The following is a 150-amino-acid chain: UPF0178 protein BamMC406_1579 (150 aa).

The protein belongs to the UPF0178 family.

This chain is UPF0178 protein BamMC406_1579, found in Burkholderia ambifaria (strain MC40-6).